The primary structure comprises 96 residues: Co-chaperonin GroES (96 aa).

This sequence belongs to the GroES chaperonin family. In terms of assembly, heptamer of 7 subunits arranged in a ring. Interacts with the chaperonin GroEL.

It localises to the cytoplasm. In terms of biological role, together with the chaperonin GroEL, plays an essential role in assisting protein folding. The GroEL-GroES system forms a nano-cage that allows encapsulation of the non-native substrate proteins and provides a physical environment optimized to promote and accelerate protein folding. GroES binds to the apical surface of the GroEL ring, thereby capping the opening of the GroEL channel. The protein is Co-chaperonin GroES of Leptospira borgpetersenii serovar Hardjo-bovis (strain JB197).